A 180-amino-acid chain; its full sequence is MYKLIKARSIVRIPPNEFGKPLNEIALNELRQQYQEKILKDLGLVLAILNVKTSEEGMLVFGDGATYHEVEFDMITYVPVVQEVVEGEVLQVDNYGVFVNLGPMDGLVHISQITDDTLKYDNVRGIIFGEKSKKVIQKGDKVRARVISVASTVTGRLPRIALTMRQPYLGKLEWITQAKK.

The 84-residue stretch at 82–165 (QEVVEGEVLQ…RLPRIALTMR (84 aa)) folds into the S1 motif domain.

This sequence belongs to the eukaryotic RPB7/RPC8 RNA polymerase subunit family. Part of the 13-subunit RNA polymerase complex. Forms a stalk with Rpo4 that extends from the main structure.

It localises to the cytoplasm. It carries out the reaction RNA(n) + a ribonucleoside 5'-triphosphate = RNA(n+1) + diphosphate. DNA-dependent RNA polymerase (RNAP) catalyzes the transcription of DNA into RNA using the four ribonucleoside triphosphates as substrates. The highly mobile Rpo4/Rpo7 heterodimer is conditionally required for transcription initiation. The sequence is that of DNA-directed RNA polymerase subunit Rpo7 from Saccharolobus shibatae (strain ATCC 51178 / DSM 5389 / JCM 8931 / NBRC 15437 / B12) (Sulfolobus shibatae).